The chain runs to 292 residues: Probable porphobilinogen deaminase (292 aa).

C233 carries the post-translational modification S-(dipyrrolylmethanemethyl)cysteine.

Belongs to the HMBS family. Dipyrromethane is required as a cofactor.

It carries out the reaction 4 porphobilinogen + H2O = hydroxymethylbilane + 4 NH4(+). It participates in porphyrin-containing compound metabolism; protoporphyrin-IX biosynthesis; coproporphyrinogen-III from 5-aminolevulinate: step 2/4. Tetrapolymerization of the monopyrrole PBG into the hydroxymethylbilane pre-uroporphyrinogen in several discrete steps. The polypeptide is Probable porphobilinogen deaminase (hemC) (Methanocaldococcus jannaschii (strain ATCC 43067 / DSM 2661 / JAL-1 / JCM 10045 / NBRC 100440) (Methanococcus jannaschii)).